Reading from the N-terminus, the 357-residue chain is MKKTPLFEIHKELGARLIEFHGWSMPVQYTSIIEEHKAVRNQCGLFDVSHMGEILVEGPGALESLQKIVTNNVARLKKGQVLYTPMCKDDGGIIDDLLVYCLGQDKYLMVVNASNIEKDFNWVRDNSNQRTEVVNESDNYALLALQGPNSKKILEKVSSVNLDSLKFYNFTTGTLKGAEVLISRTGYTGELGYELYLSPDKAVEVWQALMEAGSDLGLIPAGLGARDTLRLEKGYCLYGNDIDENTHPLEAGLGWTVKFDKASFIGKRALLKYKEEGLSRKLVGFKLKGRGIPRHGYPIKDNGDQIGVVTSGSMSPTLSEGIGMGYVRYDKATPGESITIVVRNRAITGEVVKLPFI.

It belongs to the GcvT family. In terms of assembly, the glycine cleavage system is composed of four proteins: P, T, L and H.

The enzyme catalyses N(6)-[(R)-S(8)-aminomethyldihydrolipoyl]-L-lysyl-[protein] + (6S)-5,6,7,8-tetrahydrofolate = N(6)-[(R)-dihydrolipoyl]-L-lysyl-[protein] + (6R)-5,10-methylene-5,6,7,8-tetrahydrofolate + NH4(+). In terms of biological role, the glycine cleavage system catalyzes the degradation of glycine. This chain is Aminomethyltransferase, found in Halothermothrix orenii (strain H 168 / OCM 544 / DSM 9562).